A 262-amino-acid polypeptide reads, in one-letter code: MQYKTKAKKSLGQNFLQDENIIRKIVQLANIKKHDIVVEIGPGLGALTRYLLSSSNNVSVVEFDASVIDTLIANCQKYGTPHIYNQDFLKFDISSLENSSNQKIKLIGNLPYNISSPILFKVIKDSDKIVDAHFMLQKEVVERIVSLPNSKSSGRLSVILQYHFDCSMILKIPPEVFYPQPKVDSAILRLKPKNSKELLKNYNFFEEIVKQSFAQRRKTLHNNLKSILKERKIDPSTLPVDTNLRAENLSVGDFVSLANFLS.

Residues asparagine 14, leucine 16, glycine 41, glutamate 62, aspartate 87, and asparagine 109 each contribute to the S-adenosyl-L-methionine site.

It belongs to the class I-like SAM-binding methyltransferase superfamily. rRNA adenine N(6)-methyltransferase family. RsmA subfamily.

Its subcellular location is the cytoplasm. It catalyses the reaction adenosine(1518)/adenosine(1519) in 16S rRNA + 4 S-adenosyl-L-methionine = N(6)-dimethyladenosine(1518)/N(6)-dimethyladenosine(1519) in 16S rRNA + 4 S-adenosyl-L-homocysteine + 4 H(+). Functionally, specifically dimethylates two adjacent adenosines (A1518 and A1519) in the loop of a conserved hairpin near the 3'-end of 16S rRNA in the 30S particle. May play a critical role in biogenesis of 30S subunits. This is Ribosomal RNA small subunit methyltransferase A from Francisella tularensis subsp. tularensis (strain FSC 198).